Consider the following 180-residue polypeptide: Major urinary protein 6 (180 aa).

Positions 1–18 (MKMLLLLCLGLTLVCVHA) are cleaved as a signal peptide. A disulfide bridge connects residues Cys-82 and Cys-175.

It belongs to the calycin superfamily. Lipocalin family. As to expression, abundant in the urine of adult male mice but absent from that of females.

It is found in the secreted. Functionally, binds pheromones that are released from drying urine of males. These pheromones affect the sexual behavior of females. The chain is Major urinary protein 6 (Mup6) from Mus musculus (Mouse).